Reading from the N-terminus, the 2325-residue chain is Otogelin-like protein (2325 aa).

A signal peptide spans 1-22; that stretch reads MVPWRALSLPILLVSLRGYVCA. Positions 112 to 288 constitute a VWFD 1 domain; the sequence is GICKTWGQYH…VLTPDDTKCV (177 aa). Cystine bridges form between C114/C248 and C136/C287. The N-linked (GlcNAc...) asparagine glycan is linked to N425. The region spanning 472 to 645 is the VWFD 2 domain; the sequence is VQCSVVGDSH…HAWRVSSTCF (174 aa). Cystine bridges form between C474-C609, C496-C644, and C518-C526. The 56-residue stretch at 736 to 791 folds into the TIL 1 domain; sequence CQKGMLYHHCSSLCLRSCTSLSSPEQCKDDCAEGCNCPEGKFYEETLNFCVPIYHC. N817 and N867 each carry an N-linked (GlcNAc...) asparagine glycan. The VWFD 3 domain occupies 937–1114; sequence AVCTVYGDRH…DLMEALKPCE (178 aa). Disulfide bonds link C939/C1069, C961/C1113, and C983/C990. A glycan (N-linked (GlcNAc...) asparagine) is linked at N1280. A TIL 2 domain is found at 1366–1418; the sequence is RYEPCATPCFKTCSDPEALACTFLPPVEGCLPYCPKNMILDETTLKCVHPEDC. The region spanning 1506–1695 is the VWFD 4 domain; the sequence is CRCSMLSELS…SWEIEKSFEV (190 aa). 2 cysteine pairs are disulfide-bonded: C1508–C1655 and C1549–C1571. Residues N1576 and N2170 are each glycosylated (N-linked (GlcNAc...) asparagine). 4 disulfide bridges follow: C2233-C2289, C2254-C2303, C2265-C2320, and C2269-C2322. Residues 2233 to 2325 enclose the CTCK domain; it reads CKREERICQK…EPIDCTCQWN (93 aa). Residue N2296 is glycosylated (N-linked (GlcNAc...) asparagine).

Belongs to the otogelin family.

The protein localises to the secreted. The polypeptide is Otogelin-like protein (Otogl) (Mus musculus (Mouse)).